A 403-amino-acid chain; its full sequence is Vitamin D(3) 25-hydroxylase (403 aa).

Residue Cys347 coordinates heme.

Belongs to the cytochrome P450 family. Requires heme as cofactor.

The protein localises to the cytoplasm. The catalysed reaction is 5beta-cholestane-3alpha,7alpha,12alpha-triol + 6 reduced [adrenodoxin] + 3 O2 + 5 H(+) = (25R)-3alpha,7alpha,12alpha-trihydroxy-5beta-cholestan-26-oate + 6 oxidized [adrenodoxin] + 4 H2O. Activated by partially methylated beta-cyclodextrin. Hydroxylates vitamin D(3) into 25-hydroxyvitamin D(3) and 1-alpha,25-dihydroxyvitamin D(3), its physiologically active forms. It first hydroxylates the C-25 position of vitamin D(3) to form 25-hydroxyvitamin D(3), then subsequently hydroxylates the C-1-alpha position to form 1-alpha,25-dihydroxyvitamin D(3). Also displays 25-hydroxylase activity on vitamin D(2) and 7-dehydrocholesterol. May play a role in the biosynthesis of steroid metabolic intermediates. This chain is Vitamin D(3) 25-hydroxylase, found in Pseudonocardia autotrophica (Amycolata autotrophica).